Here is a 393-residue protein sequence, read N- to C-terminus: MAAGPAGIVWQTPANPPERQDYIFRDGRRYVRPYYFEFISHVKNRWAGKTIVDLFTDEFKGRPREYYVHAVKCGRLQVDDQMVHADYVVQSSQKISHFLHRHEPPVLGGDITILQNEADVVTVCKPASVPVHPCGQYRKNTVVGILQAEHGLVPLFPVHRLDRLVSGLLIFAKNADKAESFRQQIEASLLQKEYVAKVVGVFPDGEQTVNANVHFNAREGRSTAEVCDGDGKAPIGKQACTKFQRICTDGIHSIVLCKPVTGRTHQIRVHLKHIGYPIANDEVYLSENFSPRSSKGTRINRATTLACSLPSSDPDSCADLGNNDTNEDTEADEEFSIDPMCTNCPNLAPVGYDADEEALWLHCVRYTGPDWSYECPYPDWAFLDNVSRKKLKS.

An S4 RNA-binding domain is found at 49–118; sequence KTIVDLFTDE…GDITILQNEA (70 aa). Asp-162 is an active-site residue.

This sequence belongs to the pseudouridine synthase RluA family.

The enzyme catalyses a uridine in RNA = a pseudouridine in RNA. The chain is RNA pseudouridine synthase 7 from Oryza sativa subsp. japonica (Rice).